Here is a 685-residue protein sequence, read N- to C-terminus: DNA topoisomerase 4 subunit B (685 aa).

The segment covering 389 to 400 (EAARKAREESRN) has biased composition (basic and acidic residues). Positions 389-427 (EAARKAREESRNGKKRKKGESLLSGKLTPAQSRNPKKNE) are disordered. The Toprim domain maps to 426 to 540 (NELYLVEGDS…AGKVYIALPP (115 aa)). The Mg(2+) site is built by Glu-432, Asp-505, and Asp-507. 2 stretches are compositionally biased toward acidic residues: residues 644–654 (GSILDRSEEDT) and 673–685 (QTDD…FDIE). A disordered region spans residues 644–685 (GSILDRSEEDTSAPTGESLLDAEKTKEAEQTDDTEISLFDIE).

Belongs to the type II topoisomerase family. ParE type 1 subfamily. Heterotetramer composed of ParC and ParE. Mg(2+) serves as cofactor. Requires Mn(2+) as cofactor. It depends on Ca(2+) as a cofactor.

The catalysed reaction is ATP-dependent breakage, passage and rejoining of double-stranded DNA.. Its activity is regulated as follows. Pyrrolopyrimidines inhibit both GyrB and its paralog in topoisomerase IV (parE). In terms of biological role, topoisomerase IV is essential for chromosome segregation. It relaxes supercoiled DNA. Performs the decatenation events required during the replication of a circular DNA molecule. The protein is DNA topoisomerase 4 subunit B of Enterococcus faecalis (strain ATCC 700802 / V583).